The primary structure comprises 241 residues: Ribonuclease PH (241 aa).

Phosphate is bound by residues arginine 89 and 127-129 (GTR).

Belongs to the RNase PH family. Homohexameric ring arranged as a trimer of dimers.

The catalysed reaction is tRNA(n+1) + phosphate = tRNA(n) + a ribonucleoside 5'-diphosphate. In terms of biological role, phosphorolytic 3'-5' exoribonuclease that plays an important role in tRNA 3'-end maturation. Removes nucleotide residues following the 3'-CCA terminus of tRNAs; can also add nucleotides to the ends of RNA molecules by using nucleoside diphosphates as substrates, but this may not be physiologically important. Probably plays a role in initiation of 16S rRNA degradation (leading to ribosome degradation) during starvation. This is Ribonuclease PH from Xanthomonas oryzae pv. oryzae (strain MAFF 311018).